Here is an 80-residue protein sequence, read N- to C-terminus: Exodeoxyribonuclease 7 small subunit (80 aa).

The protein belongs to the XseB family. As to quaternary structure, heterooligomer composed of large and small subunits.

It localises to the cytoplasm. The catalysed reaction is Exonucleolytic cleavage in either 5'- to 3'- or 3'- to 5'-direction to yield nucleoside 5'-phosphates.. Functionally, bidirectionally degrades single-stranded DNA into large acid-insoluble oligonucleotides, which are then degraded further into small acid-soluble oligonucleotides. This is Exodeoxyribonuclease 7 small subunit from Escherichia coli O139:H28 (strain E24377A / ETEC).